The following is a 121-amino-acid chain: MKWWKLSGQILLLFCFAWTGEWIAKQAHLPVPGSIIGIFLLLISLKFNLVKKEWIQDGADFLLKELILFFIPSAVAVIRYRDTLTQYGIDLILIIMISTLCVTLVTGLLTELLLKRKGSTQ.

4 helical membrane passes run 7–24, 28–50, 62–81, and 91–113; these read SGQI…EWIA, HLPV…FNLV, LLKE…IRYR, and LILI…TELL.

This sequence belongs to the CidA/LrgA family. CidA subfamily.

It localises to the cell membrane. In terms of biological role, increases the activity of extracellular murein hydrolases possibly by mediating their export via hole formation. Inhibited by the antiholin-like proteins LrgAB. In an unstressed cell, the LrgAB products probably inhibit the function of the CidA protein. When a cell is stressed by the addition of antibiotics or by other factors in the environment, CidA possibly oligomerizes within the bacterial cell membrane, creating lesions that disrupt the proton motive force, which in turn results in loss of cell viability. These lesions are also hypothesized to regulate the subsequent cell lysis by either allowing the murein hydrolases access to the cell wall substrate and/or regulating their activity by a possible change in the cell wall pH that results from loss of membrane potential. This Bacillus cereus (strain ATCC 14579 / DSM 31 / CCUG 7414 / JCM 2152 / NBRC 15305 / NCIMB 9373 / NCTC 2599 / NRRL B-3711) protein is Holin-like protein CidA 1 (cidA1).